Reading from the N-terminus, the 1514-residue chain is ABC transporter C family member 5 (1514 aa).

10 helical membrane passes run 16–36, 76–96, 111–131, 142–162, 177–197, 312–332, 334–354, 421–441, 446–466, and 533–553; these read LLEL…LFAV, FGFN…VLVL, FVLC…FLVL, PFLV…TMYV, SHVV…FLAW, VFAG…SYFV, YLGG…IFFT, WYLH…AILY, IAAV…IPLA, and FIFW…SIFL. Positions 307–588 constitute an ABC transmembrane type-1 1 domain; it reads AACNAVFAGL…FPDLVSMMAQ (282 aa). The region spanning 622 to 845 is the ABC transporter 1 domain; the sequence is IEIKDGVFCW…GTDFKALVSA (224 aa). Residue 657-664 participates in ATP binding; it reads GTVGSGKS. The stretch at 899–927 forms a coiled coil; that stretch reads ASDLKAIKEKKKKAKRSRKKQLVQEEERV. 6 helical membrane passes run 946-966, 986-1006, 1078-1098, 1117-1137, 1155-1175, and 1180-1200; these read GALI…QIAS, PTLL…FIFV, IVAV…PVAV, IVSI…AGAA, LLDC…WLCL, and LSTL…HGTI. The region spanning 949-1231 is the ABC transmembrane type-1 2 domain; that stretch reads IPLIILAQAA…WILSFCKLEN (283 aa). The region spanning 1268–1502 is the ABC transporter 2 domain; it reads IELVDVKVRY…KSSMFLKLVT (235 aa). Residue 1302–1309 coordinates ATP; the sequence is GRTGSGKS.

It belongs to the ABC transporter superfamily. ABCC family. Conjugate transporter (TC 3.A.1.208) subfamily. As to expression, ubiquitous, mostly in vascular tissues and epidermis, including guard cells.

It localises to the membrane. The catalysed reaction is ATP + H2O + xenobioticSide 1 = ADP + phosphate + xenobioticSide 2.. Its activity is regulated as follows. (E(2)17G) transport activity in negatively regulated by organic anions such as oestradiol-3-sulfate, luteolin-7-O-diglucuronide-4'-O-glucuronide, glycocholate, vanadate and the sulfonylurea glibenclamide, and, to a lower extent, by bafilomycin A1, NH(4)Cl, GSH, GSSG and DNB-GS. Its function is as follows. Pump for glutathione S-conjugates. Involved in regulation of K(+) and Na(+) cell content. Mediates resistance to NaCl and Li(+), confers sensitivity to sulfonylurea drugs such as glibenclamide (inducer of stomatal opening), and required for stomatal opening regulation by auxin, abscisic acid (ABA) and external Ca(2+). Transports oestradiol-17-(beta-D-glucuronide) (E(2)17G). Involved in the root auxin content regulation that controls the transition from primary root elongation to lateral root formation. Plays a role in ABA-mediated germination inhibition. High-affinity inositol hexakisphosphate transporter that plays a role in guard cell signaling and phytic acid storage. Required for phytic acid accumulation in developing seeds. Phytic acid is the primary storage form of phosphorus in cereal grains and other plant seeds. This Arabidopsis thaliana (Mouse-ear cress) protein is ABC transporter C family member 5 (ABCC5).